We begin with the raw amino-acid sequence, 31 residues long: Photosystem II reaction center protein T (31 aa).

Residues 3 to 23 traverse the membrane as a helical segment; that stretch reads SVAYIIVLAMALSVLFFAIAF.

This sequence belongs to the PsbT family. In terms of assembly, PSII is composed of 1 copy each of membrane proteins PsbA, PsbB, PsbC, PsbD, PsbE, PsbF, PsbH, PsbI, PsbJ, PsbK, PsbL, PsbM, PsbT, PsbX, PsbY, PsbZ, Psb30/Ycf12, peripheral proteins PsbO, CyanoQ (PsbQ), PsbU, PsbV and a large number of cofactors. It forms dimeric complexes.

Its subcellular location is the cellular thylakoid membrane. In terms of biological role, found at the monomer-monomer interface of the photosystem II (PS II) dimer, plays a role in assembly and dimerization of PSII. PSII is a light-driven water plastoquinone oxidoreductase, using light energy to abstract electrons from H(2)O, generating a proton gradient subsequently used for ATP formation. The protein is Photosystem II reaction center protein T of Picosynechococcus sp. (strain ATCC 27264 / PCC 7002 / PR-6) (Agmenellum quadruplicatum).